The primary structure comprises 210 residues: Thiamine-phosphate synthase (210 aa).

4-amino-2-methyl-5-(diphosphooxymethyl)pyrimidine is bound by residues 36–40 and Asn-68; that span reads QLRIK. Residues Asp-69 and Asp-88 each coordinate Mg(2+). Position 107 (Ser-107) interacts with 4-amino-2-methyl-5-(diphosphooxymethyl)pyrimidine. 133–135 provides a ligand contact to 2-[(2R,5Z)-2-carboxy-4-methylthiazol-5(2H)-ylidene]ethyl phosphate; it reads TQT. Residue Lys-136 coordinates 4-amino-2-methyl-5-(diphosphooxymethyl)pyrimidine. 2-[(2R,5Z)-2-carboxy-4-methylthiazol-5(2H)-ylidene]ethyl phosphate contacts are provided by residues Gly-165 and 185 to 186; that span reads VS.

This sequence belongs to the thiamine-phosphate synthase family. It depends on Mg(2+) as a cofactor.

The catalysed reaction is 2-[(2R,5Z)-2-carboxy-4-methylthiazol-5(2H)-ylidene]ethyl phosphate + 4-amino-2-methyl-5-(diphosphooxymethyl)pyrimidine + 2 H(+) = thiamine phosphate + CO2 + diphosphate. The enzyme catalyses 2-(2-carboxy-4-methylthiazol-5-yl)ethyl phosphate + 4-amino-2-methyl-5-(diphosphooxymethyl)pyrimidine + 2 H(+) = thiamine phosphate + CO2 + diphosphate. It carries out the reaction 4-methyl-5-(2-phosphooxyethyl)-thiazole + 4-amino-2-methyl-5-(diphosphooxymethyl)pyrimidine + H(+) = thiamine phosphate + diphosphate. It functions in the pathway cofactor biosynthesis; thiamine diphosphate biosynthesis; thiamine phosphate from 4-amino-2-methyl-5-diphosphomethylpyrimidine and 4-methyl-5-(2-phosphoethyl)-thiazole: step 1/1. In terms of biological role, condenses 4-methyl-5-(beta-hydroxyethyl)thiazole monophosphate (THZ-P) and 2-methyl-4-amino-5-hydroxymethyl pyrimidine pyrophosphate (HMP-PP) to form thiamine monophosphate (TMP). This is Thiamine-phosphate synthase from Cronobacter sakazakii (strain ATCC BAA-894) (Enterobacter sakazakii).